A 189-amino-acid chain; its full sequence is Acireductone dioxygenase 1 (189 aa).

H102, H104, E108, and H146 together coordinate Fe(2+). The Ni(2+) site is built by H102, H104, E108, and H146.

The protein belongs to the acireductone dioxygenase (ARD) family. In terms of assembly, monomer. The cofactor is Fe(2+). Ni(2+) serves as cofactor.

It catalyses the reaction 1,2-dihydroxy-5-(methylsulfanyl)pent-1-en-3-one + O2 = 3-(methylsulfanyl)propanoate + CO + formate + 2 H(+). The catalysed reaction is 1,2-dihydroxy-5-(methylsulfanyl)pent-1-en-3-one + O2 = 4-methylsulfanyl-2-oxobutanoate + formate + 2 H(+). The protein operates within amino-acid biosynthesis; L-methionine biosynthesis via salvage pathway; L-methionine from S-methyl-5-thio-alpha-D-ribose 1-phosphate: step 5/6. Catalyzes 2 different reactions between oxygen and the acireductone 1,2-dihydroxy-3-keto-5-methylthiopentene (DHK-MTPene) depending upon the metal bound in the active site. Fe-containing acireductone dioxygenase (Fe-ARD) produces formate and 2-keto-4-methylthiobutyrate (KMTB), the alpha-ketoacid precursor of methionine in the methionine recycle pathway. Ni-containing acireductone dioxygenase (Ni-ARD) produces methylthiopropionate, carbon monoxide and formate, and does not lie on the methionine recycle pathway. The protein is Acireductone dioxygenase 1 of Nocardia farcinica (strain IFM 10152).